We begin with the raw amino-acid sequence, 156 residues long: Transcriptional repressor NrdR (156 aa).

A zinc finger spans residues 3–34 (CPYCGHLDNKVIDSRINKDATITRRRRSCLAC). The 91-residue stretch at 49 to 139 (PMLVKKDGRR…VYRQFKDVDE (91 aa)) folds into the ATP-cone domain.

Belongs to the NrdR family. Zn(2+) serves as cofactor.

In terms of biological role, negatively regulates transcription of bacterial ribonucleotide reductase nrd genes and operons by binding to NrdR-boxes. The chain is Transcriptional repressor NrdR from Desulfotalea psychrophila (strain LSv54 / DSM 12343).